Reading from the N-terminus, the 106-residue chain is 10 kDa heat shock protein, mitochondrial (106 aa).

S2 carries the N-acetylserine modification. The residue at position 31 (S31) is a Phosphoserine.

It belongs to the GroES chaperonin family. Homohexamer. Post-translationally, the N-terminus is blocked.

It is found in the mitochondrion matrix. Its function is as follows. Eukaryotic CPN10 homolog which is essential for mitochondrial protein biogenesis, together with CPN60. Binds to CPN60 in the presence of Mg-ATP and suppresses the ATPase activity of the latter. The protein is 10 kDa heat shock protein, mitochondrial (HSP10) of Saccharomyces cerevisiae (strain ATCC 204508 / S288c) (Baker's yeast).